Here is a 511-residue protein sequence, read N- to C-terminus: Myrosinase 5 (511 aa).

Residues 1–23 form the signal peptide; that stretch reads MAIPKAHYSLAVLVLLFVVVSSS. Disulfide bonds link Cys31/Cys450, Cys39/Cys445, and Cys230/Cys233. 2 N-linked (GlcNAc...) asparagine glycosylation sites follow: Asn46 and Asn53. A beta-D-glucoside is bound by residues Gln64, His165, and 210–211; that span reads NQ. N-linked (GlcNAc...) asparagine glycosylation is present at Asn222. A beta-D-glucoside-binding residues include Tyr351 and Glu418. Glu418 (nucleophile) is an active-site residue. Asn428 carries N-linked (GlcNAc...) asparagine glycosylation. Residues Trp467, 474–475, and Phe483 contribute to the a beta-D-glucoside site; that span reads EF. Residue Asn489 is glycosylated (N-linked (GlcNAc...) asparagine).

It belongs to the glycosyl hydrolase 1 family. In terms of tissue distribution, specifically expressed in roots.

It carries out the reaction a thioglucoside + H2O = a sugar + a thiol.. It catalyses the reaction Hydrolysis of terminal, non-reducing beta-D-glucosyl residues with release of beta-D-glucose.. In terms of biological role, hydrolyzes sinigrin and, with lower efficiency, p-nitrophenyl beta-D-glucoside. This Arabidopsis thaliana (Mouse-ear cress) protein is Myrosinase 5.